The sequence spans 558 residues: 2-isopropylmalate synthase (558 aa).

Residues 30–303 (PIWCSVDLRD…DPKLDFSNIP (274 aa)) form the Pyruvate carboxyltransferase domain. Mg(2+) is bound by residues Asp-39, His-242, His-244, and Asn-278. The interval 438-558 (LNNTLCVQDF…GLVSALNRII (121 aa)) is regulatory domain.

This sequence belongs to the alpha-IPM synthase/homocitrate synthase family. LeuA type 2 subfamily. In terms of assembly, homodimer. Requires Mg(2+) as cofactor.

It localises to the cytoplasm. It carries out the reaction 3-methyl-2-oxobutanoate + acetyl-CoA + H2O = (2S)-2-isopropylmalate + CoA + H(+). The protein operates within amino-acid biosynthesis; L-leucine biosynthesis; L-leucine from 3-methyl-2-oxobutanoate: step 1/4. Its function is as follows. Catalyzes the condensation of the acetyl group of acetyl-CoA with 3-methyl-2-oxobutanoate (2-ketoisovalerate) to form 3-carboxy-3-hydroxy-4-methylpentanoate (2-isopropylmalate). This is 2-isopropylmalate synthase from Helicobacter hepaticus (strain ATCC 51449 / 3B1).